The chain runs to 1083 residues: MISMSCVPKEEEGEDTQIKTELHDHAADNPVRYASLESVYSVSSSSSSLCCKTAAGSHKKVNALKLPMSDSFELQPHRRPEIVHVYCRRKRRRRRRRESFLELAILQNEGVERDDRIVKIESAELDDEKEEENKKKKQKKRRIGNGELMKLGVDSTTLSVSATPPLRGCRIKAVCSGNKQDGSSRSKRNTVKNQEKVVTASATAKKWVRLSYDGVDPKHFIGLQCKVFWPLDAVWYPGSIVGYNVETKHHIVKYGDGDGEELALRREKIKFLISRDDMELLNMKFGTNDVVVDGQDYDELVILAASFEECQDFEPRDIIWAKLTGHAMWPAIIVDESVIVKRKGLNNKISGGRSVLVQFFGTHDFARIQVKQAVSFLKGLLSRSPLKCKQPRFEEAMEEAKMYLKEYKLPGRMDQLQKVADTDCSERINSGEEDSSNSGDDYTKDGEVWLRPTELGDCLHRIGDLQIINLGRIVTDSEFFKDSKHTWPEGYTATRKFISLKDPNASAMYKMEVLRDAESKTRPVFRVTTNSGEQFKGDTPSACWNKIYNRIKKIQIASDNPDVLGEGLHESGTDMFGFSNPEVDKLIQGLLQSRPPSKVSQRKYSSGKYQDHPTGYRPVRVEWKDLDKCNVCHMDEEYENNLFLQCDKCRMMVHTRCYGQLEPHNGILWLCNLCRPVALDIPPRCCLCPVVGGAMKPTTDGRWAHLACAIWIPETCLLDVKKMEPIDGVKKVSKDRWKLLCSICGVSYGACIQCSNNTCRVAYHPLCARAAGLCVELADEDRLFLLSMDDDEADQCIRLLSFCKRHRQTSNYHLETEYMIKPAHNIAEYLPPPNPSGCARTEPYNYLGRRGRKEPEALAGASSKRLFVENQPYIVGGYSRHEFSTYERIYGSKMSQITTPSNILSMAEKYTFMKETYRKRLAFGKSGIHGFGIFAKLPHRAGDMVIEYTGELVRPPIADKREHLIYNSMVGAGTYMFRIDNERVIDATRTGSIAHLINHSCEPNCYSRVISVNGDEHIIIFAKRDVAKWEELTYDYRFFSIDERLACYCGFPRCRGVVNDTEAEERQANIHASRCELKEWTES.

The Nuclear localization signal motif lies at 77–84 (HRRPEIVH). Positions 315 to 379 (PRDIIWAKLT…VKQAVSFLKG (65 aa)) constitute a PWWP domain. The disordered stretch occupies residues 422-443 (TDCSERINSGEEDSSNSGDDYT). In terms of domain architecture, FYR N-terminal spans 457–516 (DCLHRIGDLQIINLGRIVTDSEFFKDSKHTWPEGYTATRKFISLKDPNASAMYKMEVLRD). An FYR C-terminal domain is found at 520-604 (KTRPVFRVTT…PPSKVSQRKY (85 aa)). The PHD-type 1 zinc-finger motif lies at 626 to 677 (LDKCNVCHMDEEYENNLFLQCDKCRMMVHTRCYGQLEPHNGILWLCNLCRPV). The C2HC pre-PHD-type zinc-finger motif lies at 682–715 (PPRCCLCPVVGGAMKPTTDGRWAHLACAIWIPET). The tract at residues 682–807 (PPRCCLCPVV…RLLSFCKRHR (126 aa)) is extended PHD domain (ePHD). Residues 739–807 (LLCSICGVSY…RLLSFCKRHR (69 aa)) form a PHD-type 2 zinc finger. Residues 919 to 1037 (KRLAFGKSGI…KWEELTYDYR (119 aa)) enclose the SET domain. Position 929 (His929) interacts with S-adenosyl-L-methionine. O-linked (GlcNAc) serine glycosylation is present at Ser968. Residues Tyr975 and 998-999 (NH) contribute to the S-adenosyl-L-methionine site. Residue Cys1001 coordinates Zn(2+). An S-adenosyl-L-methionine-binding site is contributed by Tyr1036. Residues 1043–1059 (ERLACYCGFPRCRGVVN) form the Post-SET domain. 3 residues coordinate Zn(2+): Cys1047, Cys1049, and Cys1054.

It belongs to the class V-like SAM-binding methyltransferase superfamily. Histone-lysine methyltransferase family. TRX/MLL subfamily. In terms of processing, activated via O-glycosylation. Expressed in roots, leaves and flowers and, to a lower extent, in young seedlings.

Its subcellular location is the nucleus. The catalysed reaction is N(6)-methyl-L-lysyl-[histone] + S-adenosyl-L-methionine = N(6),N(6)-dimethyl-L-lysyl-[histone] + S-adenosyl-L-homocysteine + H(+). In terms of biological role, histone methyltransferase. Dimethylates 'Lys-4' of histone H3 (H3K4me2). H3 'Lys-4' methylation represents a specific tag for epigenetic transcriptional activation. Methylates only a limited fraction of nucleosomes of target genes (e.g. NAP and XTH33). Involved in epigenetic regulation of the floral repressor FLC and FT to prevent the transition from vegetative to reproductive development. The chain is Histone-lysine N-methyltransferase ATX2 from Arabidopsis thaliana (Mouse-ear cress).